The primary structure comprises 361 residues: Phosphoserine aminotransferase (361 aa).

R42 is a binding site for L-glutamate. Pyridoxal 5'-phosphate contacts are provided by residues 76 to 77 (AS), W102, T152, D172, and Q195. K196 is modified (N6-(pyridoxal phosphate)lysine). 237–238 (NT) is a binding site for pyridoxal 5'-phosphate.

It belongs to the class-V pyridoxal-phosphate-dependent aminotransferase family. SerC subfamily. Homodimer. Pyridoxal 5'-phosphate is required as a cofactor.

It localises to the cytoplasm. The enzyme catalyses O-phospho-L-serine + 2-oxoglutarate = 3-phosphooxypyruvate + L-glutamate. It catalyses the reaction 4-(phosphooxy)-L-threonine + 2-oxoglutarate = (R)-3-hydroxy-2-oxo-4-phosphooxybutanoate + L-glutamate. It functions in the pathway amino-acid biosynthesis; L-serine biosynthesis; L-serine from 3-phospho-D-glycerate: step 2/3. In terms of biological role, catalyzes the reversible conversion of 3-phosphohydroxypyruvate to phosphoserine and of 3-hydroxy-2-oxo-4-phosphonooxybutanoate to phosphohydroxythreonine. In Halalkalibacterium halodurans (strain ATCC BAA-125 / DSM 18197 / FERM 7344 / JCM 9153 / C-125) (Bacillus halodurans), this protein is Phosphoserine aminotransferase.